The sequence spans 166 residues: Ribosome-binding factor A (166 aa).

The tract at residues valine 119–histidine 166 is disordered. Residues glutamate 143–aspartate 154 are compositionally biased toward acidic residues.

Belongs to the RbfA family. In terms of assembly, monomer. Binds 30S ribosomal subunits, but not 50S ribosomal subunits or 70S ribosomes.

It localises to the cytoplasm. In terms of biological role, one of several proteins that assist in the late maturation steps of the functional core of the 30S ribosomal subunit. Associates with free 30S ribosomal subunits (but not with 30S subunits that are part of 70S ribosomes or polysomes). Required for efficient processing of 16S rRNA. May interact with the 5'-terminal helix region of 16S rRNA. The protein is Ribosome-binding factor A of Clavibacter michiganensis subsp. michiganensis (strain NCPPB 382).